The sequence spans 188 residues: Elongation factor P (188 aa).

At Lys34 the chain carries N6-(3,6-diaminohexanoyl)-5-hydroxylysine.

Belongs to the elongation factor P family. Post-translationally, may be beta-lysylated on the epsilon-amino group of Lys-34 by the combined action of EpmA and EpmB, and then hydroxylated on the C5 position of the same residue by EpmC (if this protein is present). Lysylation is critical for the stimulatory effect of EF-P on peptide-bond formation. The lysylation moiety may extend toward the peptidyltransferase center and stabilize the terminal 3-CCA end of the tRNA. Hydroxylation of the C5 position on Lys-34 may allow additional potential stabilizing hydrogen-bond interactions with the P-tRNA.

The protein resides in the cytoplasm. It functions in the pathway protein biosynthesis; polypeptide chain elongation. Functionally, involved in peptide bond synthesis. Alleviates ribosome stalling that occurs when 3 or more consecutive Pro residues or the sequence PPG is present in a protein, possibly by augmenting the peptidyl transferase activity of the ribosome. Modification of Lys-34 is required for alleviation. The polypeptide is Elongation factor P (Vibrio atlanticus (strain LGP32) (Vibrio splendidus (strain Mel32))).